The sequence spans 806 residues: LisH domain-containing protein ARMC9 (806 aa).

Residues Tyr7–Gly39 enclose the LisH domain. The stretch at Lys194 to Cys230 forms a coiled coil. Disordered stretches follow at residues Phe576–Lys604, Pro650–Ile736, and Asn748–Lys806. Acidic residues predominate over residues Ser579 to Lys604. The span at Val655–Met688 shows a compositional bias: polar residues. The segment covering Ser689–Ser708 has biased composition (low complexity). The segment covering Glu759 to Pro782 has biased composition (polar residues). The segment covering Gln783–Lys806 has biased composition (low complexity).

The protein resides in the cytoplasm. It is found in the cytoskeleton. The protein localises to the cilium basal body. It localises to the cell projection. Its subcellular location is the cilium. The protein resides in the microtubule organizing center. It is found in the centrosome. The protein localises to the centriole. Involved in ciliogenesis. It is required for appropriate acetylation and polyglutamylation of ciliary microtubules, and regulation of cilium length. Acts as a positive regulator of hedgehog (Hh)signaling. This is LisH domain-containing protein ARMC9 (armc9) from Xenopus laevis (African clawed frog).